A 218-amino-acid chain; its full sequence is Probable septum site-determining protein MinC (218 aa).

Belongs to the MinC family. In terms of assembly, interacts with MinD and FtsZ.

Its function is as follows. Cell division inhibitor that blocks the formation of polar Z ring septums. Rapidly oscillates between the poles of the cell to destabilize FtsZ filaments that have formed before they mature into polar Z rings. Prevents FtsZ polymerization. The protein is Probable septum site-determining protein MinC of Kosmotoga olearia (strain ATCC BAA-1733 / DSM 21960 / TBF 19.5.1).